Consider the following 938-residue polypeptide: MAVKHPAFRKKFPLLVTGSLLALQPAFSLQSFAAEQYDCQASPTGGWACAPKTATSALPPRPQHSRSAVSTTSGSATATATKQEPAPVLVTESKGRALASRSPDYSHLDWVPRDKLTAAQLAEAGPYCAGAYIEPLRPGMDDTTPLDESPMYVSAKASRYEQEKQIATLAGDVVLRQSGMQVEADEASLHQAENRGELVGNVRLRDKGTLVVGDRAELQLDNGEARIDNAEYVMHQAHVRGSALYAKREETAIIRLKDGTYTRCEPGDNAWHLKGNNVTLNPATGFGTATNVTLRVKDIPVFYTPYIYFPIDDRRQSGFLPPSLGTSSSNGFSLQTPYYFNLAPNYDATLYPTYMAKRGLLMEGEFRYLTESSEGQVGGAWLNDQEDERKLQSEYEDQRWMYSWQHKQGLNSRLLAEVDYTDISDPYYFQDLDTDLGIETQSYVNQRGTLTYRGDSYTARLNVHAYELANITDITPYDRLPQITLDGKLPFNPGGLDFTYGTEYVRFDRNLRSGFFVDKDGVTGRPQDLWYDARLTGLNRADGERLHLEPGVSLPLNWSWGFVKPQVKYLHTQYQVNLDGQGKADLATNDPENQWFGVDYKGSPNRGVGLFSLDSGLYFDRNTQLFGRETRQTLEPRAFYLYVPEEDQTDIPIFDTGEPTFSYASLWRENRFSGKDRIGDENKLSLGVTSRWIEPNGFERQRFSVGQAFYFEDRKVQLAGIDYRGRQDATSDVSPYALEYLYRFNRDWRFSSTFNWDPDQHATRSGSAMFHYQPEDNPNKIVNLGYRYRNDIVRYDRDSGTWTTNPDYGNPTLADGSPNPNYIKNYYKIDQHDFSVIWPLAPQWSLISRWQYDYGRNRTLEAFGGFEYDSCCWKLRLINRYWIDYDEVSLDPSRNDEPDRGIFLQIVLKGLGGVVGNKVETFLDQGIQGYREREDQAF.

The first 33 residues, 1-33 (MAVKHPAFRKKFPLLVTGSLLALQPAFSLQSFA), serve as a signal peptide directing secretion. Residues 52 to 96 (KTATSALPPRPQHSRSAVSTTSGSATATATKQEPAPVLVTESKGR) are disordered. Residues 65–81 (SRSAVSTTSGSATATAT) are compositionally biased toward low complexity.

The protein belongs to the LptD family. In terms of assembly, component of the lipopolysaccharide transport and assembly complex. Interacts with LptE and LptA.

It is found in the cell outer membrane. In terms of biological role, together with LptE, is involved in the assembly of lipopolysaccharide (LPS) at the surface of the outer membrane. This Ectopseudomonas mendocina (strain ymp) (Pseudomonas mendocina) protein is LPS-assembly protein LptD.